Reading from the N-terminus, the 262-residue chain is Demethyldecarbamoylnovobiocin O-methyltransferase (262 aa).

An S-adenosyl-L-methionine-binding site is contributed by 64 to 65 (TM). Glu72 acts as the Proton acceptor in catalysis. S-adenosyl-L-methionine is bound by residues 92–96 (ETGVW), 122–126 (DSFQG), Phe178, 196–197 (DG), and Ser202. Asp196 is a Mg(2+) binding site. 2 residues coordinate Mg(2+): Asp223 and Asp224.

The protein belongs to the methyltransferase TylF/MycF family. Homodimer. The cofactor is Mg(2+).

The catalysed reaction is desmethyldescarbamoylnovobiocin + S-adenosyl-L-methionine = descarbamoylnovobiocin + S-adenosyl-L-homocysteine + H(+). Its pathway is antibiotic biosynthesis; novobiocin biosynthesis. In terms of biological role, S-adenosyl-L-methionine-dependent O-methyltransferase that methylates at 4-OH of the noviose moiety, the penultimate step in the novobiocin biosynthesis pathway. Novobiocin is an aminocoumarin family antibiotic that targets bacterial DNA gyrases. In Streptomyces niveus (Streptomyces spheroides), this protein is Demethyldecarbamoylnovobiocin O-methyltransferase (novP).